A 386-amino-acid polypeptide reads, in one-letter code: Succinate--CoA ligase [ADP-forming] subunit beta (386 aa).

One can recognise an ATP-grasp domain in the interval 9 to 244; that stretch reads KDILRQFGVP…LDEEDPAEVE (236 aa). ATP contacts are provided by residues lysine 46, 53-55, glutamate 99, alanine 102, and glutamate 107; that span reads GRG. Asparagine 199 and aspartate 213 together coordinate Mg(2+). Substrate-binding positions include asparagine 264 and 321–323; that span reads GIM.

Belongs to the succinate/malate CoA ligase beta subunit family. Heterotetramer of two alpha and two beta subunits. The cofactor is Mg(2+).

It carries out the reaction succinate + ATP + CoA = succinyl-CoA + ADP + phosphate. The enzyme catalyses GTP + succinate + CoA = succinyl-CoA + GDP + phosphate. It functions in the pathway carbohydrate metabolism; tricarboxylic acid cycle; succinate from succinyl-CoA (ligase route): step 1/1. Functionally, succinyl-CoA synthetase functions in the citric acid cycle (TCA), coupling the hydrolysis of succinyl-CoA to the synthesis of either ATP or GTP and thus represents the only step of substrate-level phosphorylation in the TCA. The beta subunit provides nucleotide specificity of the enzyme and binds the substrate succinate, while the binding sites for coenzyme A and phosphate are found in the alpha subunit. This Delftia acidovorans (strain DSM 14801 / SPH-1) protein is Succinate--CoA ligase [ADP-forming] subunit beta.